The chain runs to 266 residues: MSKVSGAGEEKLKVLALHGYRQNADSFKSKLGSFRKMLNKYVEFVFVSAPHPAAPLEAVGGEPDPNQRSWWFNKDDRTFKGTNQGGPAYGFDESLRLVERTWQAEGCHGLLGFSQGACFVGLLCDLSARGMTTMKPQFAVVASGFRSGSLVHLNYYENKVQIPSLHIFGETDEIITKDMSEALAETFLDPEVVTHPGGHYFPAQASLKETYVDFFRDQLQQHLEAKELQNATEENSFHLEGQEEAEESALQPVHEGLQNGSDSDSD.

Catalysis depends on charge relay system residues serine 114, aspartate 172, and histidine 199. Residues 231 to 266 form a disordered region; that stretch reads ATEENSFHLEGQEEAEESALQPVHEGLQNGSDSDSD.

This sequence belongs to the LovG family.

This is Esterase AGAP003155 from Anopheles gambiae (African malaria mosquito).